We begin with the raw amino-acid sequence, 231 residues long: UPF0758 protein RBAM_025090 (231 aa).

Positions 109 to 231 (VIRSPEDGAK…FVSLKEKGYL (123 aa)) constitute an MPN domain. 3 residues coordinate Zn(2+): His180, His182, and Asp193. Residues 180–193 (HNHPSGDPTPSRED) carry the JAMM motif motif.

Belongs to the UPF0758 family.

The sequence is that of UPF0758 protein RBAM_025090 from Bacillus velezensis (strain DSM 23117 / BGSC 10A6 / LMG 26770 / FZB42) (Bacillus amyloliquefaciens subsp. plantarum).